A 102-amino-acid polypeptide reads, in one-letter code: Small ribosomal subunit protein uS10 (102 aa).

Belongs to the universal ribosomal protein uS10 family. As to quaternary structure, part of the 30S ribosomal subunit.

Its function is as follows. Involved in the binding of tRNA to the ribosomes. In Streptococcus pneumoniae (strain CGSP14), this protein is Small ribosomal subunit protein uS10.